The sequence spans 137 residues: Glycine cleavage system H protein (137 aa).

One can recognise a Lipoyl-binding domain in the interval 36–118 (PAIIGITEYA…YGEGWLLKVE (83 aa)). K77 carries the N6-lipoyllysine modification.

Belongs to the GcvH family. As to quaternary structure, the glycine cleavage system is composed of four proteins: P, T, L and H. Requires (R)-lipoate as cofactor.

Functionally, the glycine cleavage system catalyzes the degradation of glycine. The H protein shuttles the methylamine group of glycine from the P protein to the T protein. In Bifidobacterium longum (strain NCC 2705), this protein is Glycine cleavage system H protein.